A 336-amino-acid polypeptide reads, in one-letter code: Holliday junction branch migration complex subunit RuvB (336 aa).

Positions 1–11 are enriched in basic and acidic residues; that stretch reads MDDDKLLSGDK. A disordered region spans residues 1 to 21; sequence MDDDKLLSGDKADDEEASLEK. The large ATPase domain (RuvB-L) stretch occupies residues 1-184; it reads MDDDKLLSGD…FGIVEHMAYY (184 aa). Residues Leu23, Arg24, Gly65, Lys68, Thr69, Thr70, 131–133, Arg174, Tyr184, and Arg221 each bind ATP; that span reads EDF. Thr69 is a Mg(2+) binding site. Residues 185–255 are small ATPAse domain (RuvB-S); it reads EVADLEDIVK…IVARSLTYLR (71 aa). The tract at residues 258-336 is head domain (RuvB-H); it reads DAGLDETDNK…HLGFPYPENK (79 aa). Positions 313 and 318 each coordinate DNA.

The protein belongs to the RuvB family. In terms of assembly, homohexamer. Forms an RuvA(8)-RuvB(12)-Holliday junction (HJ) complex. HJ DNA is sandwiched between 2 RuvA tetramers; dsDNA enters through RuvA and exits via RuvB. An RuvB hexamer assembles on each DNA strand where it exits the tetramer. Each RuvB hexamer is contacted by two RuvA subunits (via domain III) on 2 adjacent RuvB subunits; this complex drives branch migration. In the full resolvosome a probable DNA-RuvA(4)-RuvB(12)-RuvC(2) complex forms which resolves the HJ.

The protein localises to the cytoplasm. The enzyme catalyses ATP + H2O = ADP + phosphate + H(+). The RuvA-RuvB-RuvC complex processes Holliday junction (HJ) DNA during genetic recombination and DNA repair, while the RuvA-RuvB complex plays an important role in the rescue of blocked DNA replication forks via replication fork reversal (RFR). RuvA specifically binds to HJ cruciform DNA, conferring on it an open structure. The RuvB hexamer acts as an ATP-dependent pump, pulling dsDNA into and through the RuvAB complex. RuvB forms 2 homohexamers on either side of HJ DNA bound by 1 or 2 RuvA tetramers; 4 subunits per hexamer contact DNA at a time. Coordinated motions by a converter formed by DNA-disengaged RuvB subunits stimulates ATP hydrolysis and nucleotide exchange. Immobilization of the converter enables RuvB to convert the ATP-contained energy into a lever motion, pulling 2 nucleotides of DNA out of the RuvA tetramer per ATP hydrolyzed, thus driving DNA branch migration. The RuvB motors rotate together with the DNA substrate, which together with the progressing nucleotide cycle form the mechanistic basis for DNA recombination by continuous HJ branch migration. Branch migration allows RuvC to scan DNA until it finds its consensus sequence, where it cleaves and resolves cruciform DNA. The polypeptide is Holliday junction branch migration complex subunit RuvB (Lactiplantibacillus plantarum (strain ATCC BAA-793 / NCIMB 8826 / WCFS1) (Lactobacillus plantarum)).